The following is a 236-amino-acid chain: UPF0257 lipoprotein YnfC (236 aa).

An N-terminal signal peptide occupies residues 1–16 (MKYKLLPCLLAIFLTG). Residue C17 is the site of N-palmitoyl cysteine attachment. C17 carries the S-diacylglycerol cysteine lipid modification.

This sequence belongs to the UPF0257 family.

The protein resides in the cell membrane. The sequence is that of UPF0257 lipoprotein YnfC from Escherichia coli O17:K52:H18 (strain UMN026 / ExPEC).